Consider the following 903-residue polypeptide: Dynamin-like GTPase msp1, mitochondrial (903 aa).

The transit peptide at 1-78 directs the protein to the mitochondrion; the sequence is MGISWFLSRF…RFFSFSSISR (78 aa). A helical membrane pass occupies residues 86–103; it reads LPVAGFSLVAGGAAYIGA. A compositionally biased stretch (basic and acidic residues) spans 167 to 188; it reads VLQAERAKEHRSNSNDKQKSSD. The disordered stretch occupies residues 167 to 198; the sequence is VLQAERAKEHRSNSNDKQKSSDNDEDPNDTTV. The chain crosses the membrane as a helical span at residues 198-214; the sequence is VGIGAALAASILSVDSV. A Dynamin-type G domain is found at 260–531; it reads AVTLPSIVVI…LEYTMSKNLQ (272 aa). Residues 270–277 are G1 motif; the sequence is GSQSSGKS. 7 residues coordinate GTP: serine 273, serine 274, glycine 275, lysine 276, serine 277, serine 278, and glycine 292. Residue serine 277 coordinates Mg(2+). The tract at residues 296–298 is G2 motif; that stretch reads VTR. Mg(2+)-binding residues include threonine 297 and aspartate 370. The interval 370–373 is G3 motif; sequence DLPG. The interval 438-441 is G4 motif; the sequence is TKMD. GTP-binding residues include lysine 439, aspartate 441, and serine 468. The segment at 467-470 is G5 motif; sequence ISRI. Positions 691–805 are paddle region; sequence ATSEQVENCV…VLKSRACKHK (115 aa). Cysteines 802 and 811 form a disulfide. The 94-residue stretch at 805–898 folds into the GED domain; it reads KEAKYTCPEI…KINSLVILEQ (94 aa).

It belongs to the TRAFAC class dynamin-like GTPase superfamily. Dynamin/Fzo/YdjA family. In terms of assembly, homooligomer. Interacts with cdr1. Cleavage of the transit peptide by mitochondrial processing protease (MPP) produces a long integral membrane form of msp1 (l-msp1). Further processing by a rhomboid protease after the transmembrane regions produces a short peripheral membrane form of msp1 (s-msp1). Both isoforms are required for full activity.

It is found in the mitochondrion inner membrane. The protein localises to the mitochondrion intermembrane space. The catalysed reaction is GTP + H2O = GDP + phosphate + H(+). In terms of biological role, dynamin-related GTPase that is essential for normal mitochondrial morphology by mediating fusion of the mitochondrial inner membranes and maintaining respiratory chain function. Exists in two forms: the transmembrane, long form (Dynamin-like GTPase msp1, long form; l-msp1), which is tethered to the inner mitochondrial membrane, and the short soluble form (Dynamin-like GTPase msp1, short form; s-msp1), which results from proteolytic cleavage and localizes in the intermembrane space. Both forms (l-msp1 and s-msp1) cooperate to catalyze the fusion of the mitochondrial inner membrane. Its role in mitochondrial morphology is required for mitochondrial genome maintenance. Its function is as follows. Constitutes the transmembrane long form (l-msp1) that plays a central role in mitochondrial inner membrane fusion. L-msp1 and the soluble short form (s-msp1) form higher-order helical assemblies that coordinate the fusion of mitochondrial inner membranes. Inner membrane-anchored l-msp1 molecules initiate membrane remodeling by recruiting soluble s-msp1 to rapidly polymerize into a flexible cylindrical scaffold encaging the mitochondrial inner membrane. Once at the membrane surface, the formation of s-msp1 helices induce bilayer curvature. Msp1 dimerization through the paddle region, which inserts into cardiolipin-containing membrane, promotes GTP hydrolysis and the helical assembly of a flexible msp1 lattice on the membrane, which drives membrane curvature and mitochondrial fusion. Constitutes the soluble short form (s-msp1) generated by cleavage, which plays a central role in mitochondrial inner membrane fusion. The transmembrane long form (l-msp1) and the s-msp1 form higher-order helical assemblies that coordinate the fusion of mitochondrial inner membranes. Inner membrane-anchored l-msp1 molecules initiate membrane remodeling by recruiting soluble s-msp1 to rapidly polymerize into a flexible cylindrical scaffold encaging the mitochondrial inner membrane. Once at the membrane surface, the formation of s-msp1 helices induce bilayer curvature. Msp1 dimerization through the paddle region, which inserts into cardiolipin-containing membrane, promotes GTP hydrolysis and the helical assembly of a flexible msp1 lattice on the membrane, which drives membrane curvature and mitochondrial fusion. This Schizosaccharomyces pombe (strain 972 / ATCC 24843) (Fission yeast) protein is Dynamin-like GTPase msp1, mitochondrial.